A 229-amino-acid chain; its full sequence is MNTLLDGIDWEKHPLLPAIVQERGSGEVLMLAYMNQEALNLTLSTQVAHYFSRSKGRIWKKGESSGHIQKIHEIFLDCDSDTILLQVEQVGVACHTGRKSCFFQKVELDSSLSLTSEAPDTSALYGVVDRLYHELLARQGADPQSSYTAKLFSKGENTIGKKIVEEAAELSFAIKDSSESEIVYEAADLLYHALVGLAFRGIHPDKIKQELQRRQGVSGIAEKNSRKDS.

The interval 1–127 (MNTLLDGIDW…APDTSALYGV (127 aa)) is phosphoribosyl-AMP cyclohydrolase. The segment at 128-229 (VDRLYHELLA…IAEKNSRKDS (102 aa)) is phosphoribosyl-ATP pyrophosphohydrolase.

The protein in the N-terminal section; belongs to the PRA-CH family. In the C-terminal section; belongs to the PRA-PH family.

It localises to the cytoplasm. The catalysed reaction is 1-(5-phospho-beta-D-ribosyl)-ATP + H2O = 1-(5-phospho-beta-D-ribosyl)-5'-AMP + diphosphate + H(+). It carries out the reaction 1-(5-phospho-beta-D-ribosyl)-5'-AMP + H2O = 1-(5-phospho-beta-D-ribosyl)-5-[(5-phospho-beta-D-ribosylamino)methylideneamino]imidazole-4-carboxamide. It functions in the pathway amino-acid biosynthesis; L-histidine biosynthesis; L-histidine from 5-phospho-alpha-D-ribose 1-diphosphate: step 2/9. The protein operates within amino-acid biosynthesis; L-histidine biosynthesis; L-histidine from 5-phospho-alpha-D-ribose 1-diphosphate: step 3/9. This is Histidine biosynthesis bifunctional protein HisIE from Wolinella succinogenes (strain ATCC 29543 / DSM 1740 / CCUG 13145 / JCM 31913 / LMG 7466 / NCTC 11488 / FDC 602W) (Vibrio succinogenes).